A 414-amino-acid chain; its full sequence is MASGDTLYIATDGSEMPAEIVELHEIEVETIPVETIETTVVGEEEEEDDDDEDGGGGDHGGGGGHGHAGHHHHHHHHHHHPPMIALQPLVTDDPTQVHHHQEVILVQTREEVVGGDDSDGLRAEDGFEDQILIPVPAPAGGDDDYIEQTLVTVAAAGKSGGGGSSSSGGGRVKKGGGKKSGKKSYLSGGAGAAGGGGADPGNKKWEQKQVQIKTLEGEFSVTMWSSDEKKDIDHETVVEEQIIGENSPPDYSEYMTGKKLPPGGIPGIDLSDPKQLAEFARMKPRKIKEDDAPRTIACPHKGCTKMFRDNSAMRKHLHTHGPRVHVCAECGKAFVESSKLKRHQLVHTGEKPFQCTFEGCGKRFSLDFNLRTHVRIHTGDRPYVCPFDGCNKKFAQSTNLKSHILTHAKAKNNQ.

The interaction with the SMAD1/SMAD4 complex stretch occupies residues 1 to 170; sequence MASGDTLYIA…GGGSSSSGGG (170 aa). The segment at 33-81 is disordered; it reads VETIETTVVGEEEEEDDDDEDGGGGDHGGGGGHGHAGHHHHHHHHHHHP. Residues 42-55 are compositionally biased toward acidic residues; it reads GEEEEEDDDDEDGG. Residues 57–66 show a composition bias toward gly residues; it reads GDHGGGGGHG. A compositionally biased stretch (basic residues) spans 67–81; it reads HAGHHHHHHHHHHHP. The interval 116-260 is gly-rich region involved in interaction with HCFC1; it reads DDSDGLRAED…YSEYMTGKKL (145 aa). A Phosphoserine; by CK2 modification is found at Ser-118. The segment at 157-203 is disordered; sequence GKSGGGGSSSSGGGRVKKGGGKKSGKKSYLSGGAGAAGGGGADPGNK. Over residues 158-170 the composition is skewed to gly residues; sequence KSGGGGSSSSGGG. Residues 171-182 show a composition bias toward basic residues; it reads RVKKGGGKKSGK. Residues Lys-182 and Lys-183 each participate in a glycyl lysine isopeptide (Lys-Gly) (interchain with G-Cter in SUMO2) cross-link. Ser-187 carries the phosphoserine modification. Positions 188-199 are enriched in gly residues; sequence GGAGAAGGGGAD. Residues Lys-208 and Lys-230 each participate in a glycyl lysine isopeptide (Lys-Gly) (interchain with G-Cter in SUMO2) cross-link. Ser-247 carries the post-translational modification Phosphoserine. Residues 257 to 341 form an involved in nuclear matrix association region; it reads GKKLPPGGIP…KAFVESSKLK (85 aa). Residues Lys-286 and Lys-288 each participate in a glycyl lysine isopeptide (Lys-Gly) (interchain with G-Cter in SUMO2) cross-link. The segment at 295-414 is binding to DNA; sequence TIACPHKGCT…LTHAKAKNNQ (120 aa). C2H2-type zinc fingers lie at residues 296-320, 325-347, and 353-377; these read IACPHKGCTKMFRDNSAMRKHLHTH, HVCAECGKAFVESSKLKRHQLVH, and FQCTFEGCGKRFSLDFNLRTHVRIH. Cys-298, Cys-303, His-316, His-320, Cys-327, Cys-330, His-343, His-347, Cys-355, Cys-360, His-373, and His-377 together coordinate Zn(2+). An involved in repression of activated transcription region spans residues 333–371; sequence AFVESSKLKRHQLVHTGEKPFQCTFEGCGKRFSLDFNLR. The tract at residues 371–397 is involved in masking transactivation domain; it reads RTHVRIHTGDRPYVCPFDGCNKKFAQS. Thr-378 carries the phosphothreonine modification. Residues 383–407 form a C2H2-type 4 zinc finger; the sequence is YVCPFDGCNKKFAQSTNLKSHILTH. 4 residues coordinate Zn(2+): Cys-385, Cys-390, His-403, and His-407. Glycyl lysine isopeptide (Lys-Gly) (interchain with G-Cter in SUMO2) cross-links involve residues Lys-409 and Lys-411.

This sequence belongs to the YY transcription factor family. As to quaternary structure, interacts with YAF2 through the region encompassing the first and second zinc fingers. Component of the chromatin remodeling INO80 complex; specifically part of a complex module associated with the DBINO domain of INO80. Interacts with EED and EZH2; the interactions are indicative for an association with the PRC2/EED-EZH2 complex. Interacts with SFMBT2. Found in a complex with SMAD1 and SMAD4. Found in a complex with YY1, SIN3A and HDAC1. Accessory component of the polycomb repressive deubiquitinase (PR-DUB) complex, at least composed of BAP1, one of ASXL1, ASXL2 or (probably) ASXL3 and one of MBD5 or MBD6; the PR-DUB core associates with a number of accessory proteins, including FOXK1, FOXK2, KDM1B, HCFC1, YY1 and OGT. Interacts (via Gly-rich region) with HCFC1; the interaction is direct. Interacts (via C-terminal zinc-finger domains) with BAP1 (via ULD domain); the interaction is direct and requires HCFC1. Post-translationally, phosphorylation at Ser-118 by CK2 prevents proteolytic cleavage by caspase-7 (CASP7) during apoptosis. Proteolytically cleaved by caspase-7 (CASP7) in response to apoptosis. Phosphorylation at Ser-118 protects against proteolytic cleavage. In terms of processing, transiently poly-ADP-ribosylated by PARP1 upon DNA damage, with the effect of decreasing affinity of YY1 to its cognate DNA binding sites. Post-translationally, ubiquitinated.

It is found in the nucleus matrix. In terms of biological role, multifunctional transcription factor that exhibits positive and negative control on a large number of cellular and viral genes by binding to sites overlapping the transcription start site. Binds to the consensus sequence 5'-CCGCCATNTT-3'; some genes have been shown to contain a longer binding motif allowing enhanced binding; the initial CG dinucleotide can be methylated greatly reducing the binding affinity. The effect on transcription regulation is depending upon the context in which it binds and diverse mechanisms of action include direct activation or repression, indirect activation or repression via cofactor recruitment, or activation or repression by disruption of binding sites or conformational DNA changes. Its activity is regulated by transcription factors and cytoplasmic proteins that have been shown to abrogate or completely inhibit YY1-mediated activation or repression. For example, it acts as a repressor in absence of adenovirus E1A protein but as an activator in its presence. Acts synergistically with the SMAD1 and SMAD4 in bone morphogenetic protein (BMP)-mediated cardiac-specific gene expression. Binds to SMAD binding elements (SBEs) (5'-GTCT/AGAC-3') within BMP response element (BMPRE) of cardiac activating regions. May play an important role in development and differentiation. Proposed to recruit the PRC2/EED-EZH2 complex to target genes that are transcriptional repressed. Involved in DNA repair. In vitro, binds to DNA recombination intermediate structures (Holliday junctions). Plays a role in regulating enhancer activation. Recruits the PR-DUB complex to specific gene-regulatory regions. Functionally, proposed core component of the chromatin remodeling INO80 complex which is involved in transcriptional regulation, DNA replication and probably DNA repair; proposed to target the INO80 complex to YY1-responsive elements. The sequence is that of Transcriptional repressor protein YY1 (YY1) from Homo sapiens (Human).